We begin with the raw amino-acid sequence, 150 residues long: Large ribosomal subunit protein bL9 (150 aa).

The protein belongs to the bacterial ribosomal protein bL9 family.

Functionally, binds to the 23S rRNA. This is Large ribosomal subunit protein bL9 from Ralstonia nicotianae (strain ATCC BAA-1114 / GMI1000) (Ralstonia solanacearum).